The primary structure comprises 555 residues: Glycerol dehydratase large subunit (555 aa).

It belongs to the diol/glycerol dehydratase large subunit family. As to quaternary structure, probably consists of three subunits: large, medium, and small. It depends on adenosylcob(III)alamin as a cofactor.

The catalysed reaction is glycerol = 3-hydroxypropanal + H2O. This chain is Glycerol dehydratase large subunit (dhaB), found in Citrobacter freundii.